The primary structure comprises 123 residues: Fluoride-specific ion channel FluC 2 (123 aa).

Helical transmembrane passes span 1 to 21 and 30 to 50; these read MTML…FLLD and VPVP…LGLI. Positions 74 and 77 each coordinate Na(+). Residues 99-119 traverse the membrane as a helical segment; that stretch reads ALHCMGMAIAGVLAAILGLAL.

Belongs to the fluoride channel Fluc/FEX (TC 1.A.43) family.

It is found in the cell membrane. The catalysed reaction is fluoride(in) = fluoride(out). With respect to regulation, na(+) is not transported, but it plays an essential structural role and its presence is essential for fluoride channel function. Its function is as follows. Fluoride-specific ion channel. Important for reducing fluoride concentration in the cell, thus reducing its toxicity. This Cutibacterium acnes (strain DSM 16379 / KPA171202) (Propionibacterium acnes) protein is Fluoride-specific ion channel FluC 2.